The sequence spans 530 residues: GATA zinc finger domain-containing protein 4 (530 aa).

Disordered regions lie at residues 1-27 and 212-386; these read MSIN…FWDN and STVV…INNN. Composition is skewed to low complexity over residues 7–17, 216–290, and 299–386; these read NNNKNNNNKNN, SNSP…FNNN, and NSNN…INNN. The GATA-type zinc finger occupies 494–518; that stretch reads CSMCNIKESISWIKTMVNGQLCNAC.

The protein is GATA zinc finger domain-containing protein 4 (gtaD) of Dictyostelium discoideum (Social amoeba).